Consider the following 191-residue polypeptide: IMP cyclohydrolase (191 aa).

Belongs to the archaeal IMP cyclohydrolase family.

It catalyses the reaction IMP + H2O = 5-formamido-1-(5-phospho-D-ribosyl)imidazole-4-carboxamide. The protein operates within purine metabolism; IMP biosynthesis via de novo pathway; IMP from 5-formamido-1-(5-phospho-D-ribosyl)imidazole-4-carboxamide: step 1/1. In terms of biological role, catalyzes the cyclization of 5-formylamidoimidazole-4-carboxamide ribonucleotide to IMP. The sequence is that of IMP cyclohydrolase from Natronomonas pharaonis (strain ATCC 35678 / DSM 2160 / CIP 103997 / JCM 8858 / NBRC 14720 / NCIMB 2260 / Gabara) (Halobacterium pharaonis).